We begin with the raw amino-acid sequence, 224 residues long: PKHD-type hydroxylase KPN78578_12210 (224 aa).

In terms of domain architecture, Fe2OG dioxygenase spans 77–176 (TISAPLFNRY…RQASFLWIQS (100 aa)). His-95, Asp-97, and His-157 together coordinate Fe cation. Arg-167 contacts 2-oxoglutarate.

Requires Fe(2+) as cofactor. The cofactor is L-ascorbate.

This is PKHD-type hydroxylase KPN78578_12210 from Klebsiella pneumoniae subsp. pneumoniae (strain ATCC 700721 / MGH 78578).